The following is a 328-amino-acid chain: MSIIQSIIEKAKSNKKKIVLPEGAEPRTLKAADIVLKEGIADLVLLGNADEIRNAAEGLDISKAEIIDPLKSEKFDKYATDFYELRKNKGITLEKAKETIKDNIYFGCMMVKEGYADGLVSGAIHATADLLRPAFQIVKTAPGAKIVSSFFIMEVPNCEFGENGVFLFADCAVNPSPNAEELASIAVQSANTAKTLLGMEPRVAMLSFSTKGSASHELVDKVRTATEIAKNLIPDVAIDGELQLDAALVKEVAELKAPGSPVAGRANVLIFPDLQAGNIGYKLVQRLAKANAIGPITQGMGAPVNDLSRGCSYKDIVDVIATTAVQAQ.

It belongs to the phosphate acetyltransferase and butyryltransferase family.

It localises to the cytoplasm. The enzyme catalyses acetyl-CoA + phosphate = acetyl phosphate + CoA. It participates in metabolic intermediate biosynthesis; acetyl-CoA biosynthesis; acetyl-CoA from acetate: step 2/2. The chain is Phosphate acetyltransferase (pta) from Thermoanaerobacterium thermosaccharolyticum (strain ATCC 7956 / DSM 571 / NCIMB 9385 / NCA 3814 / NCTC 13789 / WDCM 00135 / 2032) (Clostridium thermosaccharolyticum).